Reading from the N-terminus, the 218-residue chain is uncharacterized protein (218 aa).

This is an uncharacterized protein from Treponema pallidum (strain Nichols).